The following is a 329-amino-acid chain: ATP phosphoribosyltransferase regulatory subunit (329 aa).

Belongs to the class-II aminoacyl-tRNA synthetase family. HisZ subfamily. In terms of assembly, heteromultimer composed of HisG and HisZ subunits.

Its subcellular location is the cytoplasm. The protein operates within amino-acid biosynthesis; L-histidine biosynthesis; L-histidine from 5-phospho-alpha-D-ribose 1-diphosphate: step 1/9. Its function is as follows. Required for the first step of histidine biosynthesis. May allow the feedback regulation of ATP phosphoribosyltransferase activity by histidine. The protein is ATP phosphoribosyltransferase regulatory subunit of Streptococcus gordonii (strain Challis / ATCC 35105 / BCRC 15272 / CH1 / DL1 / V288).